Here is a 506-residue protein sequence, read N- to C-terminus: Galactose/methyl galactoside import ATP-binding protein MglA (506 aa).

ABC transporter domains follow at residues 14-249 (LEMS…VGRS) and 264-506 (VILE…SLHL). Residue 46 to 53 (GENGAGKS) participates in ATP binding.

It belongs to the ABC transporter superfamily. Galactose/methyl galactoside importer (TC 3.A.1.2.3) family. In terms of assembly, the complex is composed of one ATP-binding protein (MglA), two transmembrane proteins (MglC) and a solute-binding protein (MglB).

Its subcellular location is the cell inner membrane. It carries out the reaction D-galactose(out) + ATP + H2O = D-galactose(in) + ADP + phosphate + H(+). The enzyme catalyses methyl beta-D-galactoside(out) + ATP + H2O = methyl beta-D-galactoside(in) + ADP + phosphate + H(+). In terms of biological role, part of the ABC transporter complex MglABC involved in galactose/methyl galactoside import. Responsible for energy coupling to the transport system. The polypeptide is Galactose/methyl galactoside import ATP-binding protein MglA (Escherichia coli O157:H7).